A 200-amino-acid polypeptide reads, in one-letter code: Sperm acrosome developmental regulator (200 aa).

S63 carries the phosphoserine modification. Residues 167 to 183 (QERRRRRRMRSHASHTS) show a composition bias toward basic residues. The disordered stretch occupies residues 167–200 (QERRRRRRMRSHASHTSRHSESVQGLKHDARSPL). The segment covering 184–200 (RHSESVQGLKHDARSPL) has biased composition (basic and acidic residues).

The protein localises to the cytoplasmic vesicle. The protein resides in the secretory vesicle. It localises to the acrosome. Its function is as follows. May play an important role in acrosome formation and nucleus shaping during spermiogenesis. The protein is Sperm acrosome developmental regulator (Spacdr) of Rattus norvegicus (Rat).